The sequence spans 245 residues: Biosynthetic peptidoglycan transglycosylase (245 aa).

The helical transmembrane segment at 20 to 42 (VYAGSVFAGAWLATQLFYLVQIA) threads the bilayer.

This sequence belongs to the glycosyltransferase 51 family.

It is found in the cell inner membrane. It carries out the reaction [GlcNAc-(1-&gt;4)-Mur2Ac(oyl-L-Ala-gamma-D-Glu-L-Lys-D-Ala-D-Ala)](n)-di-trans,octa-cis-undecaprenyl diphosphate + beta-D-GlcNAc-(1-&gt;4)-Mur2Ac(oyl-L-Ala-gamma-D-Glu-L-Lys-D-Ala-D-Ala)-di-trans,octa-cis-undecaprenyl diphosphate = [GlcNAc-(1-&gt;4)-Mur2Ac(oyl-L-Ala-gamma-D-Glu-L-Lys-D-Ala-D-Ala)](n+1)-di-trans,octa-cis-undecaprenyl diphosphate + di-trans,octa-cis-undecaprenyl diphosphate + H(+). Its pathway is cell wall biogenesis; peptidoglycan biosynthesis. Its function is as follows. Peptidoglycan polymerase that catalyzes glycan chain elongation from lipid-linked precursors. The sequence is that of Biosynthetic peptidoglycan transglycosylase from Burkholderia ambifaria (strain MC40-6).